The sequence spans 846 residues: Translation initiation factor IF-2 (846 aa).

The segment at 94–263 (QRSPEEIQAE…HGFQNPTGPV (170 aa)) is disordered. Positions 96 to 135 (SPEEIQAEQKRELEERRAAENAARDKVEAEVRQRNEEQAR) are enriched in basic and acidic residues. 2 stretches are compositionally biased toward low complexity: residues 136-148 (RQAA…APAP) and 158-176 (AAPV…ASED). Composition is skewed to basic and acidic residues over residues 177 to 206 (AAAR…RGEA) and 230 to 239 (TTDEESDGAR). The segment covering 240 to 253 (RGRGGKSKLKKRNQ) has biased composition (basic residues). The tr-type G domain occupies 346–513 (SRAPVVTVMG…AVLLQAEILE (168 aa)). Residues 355–362 (GHVDHGKT) form a G1 region. 355–362 (GHVDHGKT) is a GTP binding site. Positions 380–384 (GITQH) are G2. Residues 401–404 (DTPG) form a G3 region. Residues 401 to 405 (DTPGH) and 455 to 458 (NKID) contribute to the GTP site. Positions 455–458 (NKID) are G4. Positions 491–493 (SAK) are G5.

Belongs to the TRAFAC class translation factor GTPase superfamily. Classic translation factor GTPase family. IF-2 subfamily.

It localises to the cytoplasm. In terms of biological role, one of the essential components for the initiation of protein synthesis. Protects formylmethionyl-tRNA from spontaneous hydrolysis and promotes its binding to the 30S ribosomal subunits. Also involved in the hydrolysis of GTP during the formation of the 70S ribosomal complex. The protein is Translation initiation factor IF-2 of Pseudomonas putida (strain ATCC 700007 / DSM 6899 / JCM 31910 / BCRC 17059 / LMG 24140 / F1).